Consider the following 744-residue polypeptide: FHF complex subunit HOOK-interacting protein 2B (744 aa).

Disordered regions lie at residues 184-213 (KTAR…LNRD) and 510-530 (LDSG…SSDG). The span at 197-213 (AGYRDKDCPHSDALNRD) shows a compositional bias: basic and acidic residues.

It belongs to the FHIP family. Expressed in colon.

In terms of biological role, able to activate MAPK/ERK and TGFB signaling pathways. May regulate the activity of genes involved in intestinal barrier function and immunoprotective inflammation. May play a role in cell proliferation. This chain is FHF complex subunit HOOK-interacting protein 2B, found in Mus musculus (Mouse).